A 1288-amino-acid chain; its full sequence is Contactin-associated protein-like 3B (1288 aa).

A signal peptide spans 1 to 25; it reads MASVAWAVLKVLLLLPTQTWSPVGA. The segment at 23–61 is disordered; sequence VGAGNPPDCDSPLASALPRSSFSSSSELSSSHGPGFSRL. Residues 26-1245 lie on the Extracellular side of the membrane; that stretch reads GNPPDCDSPL…LVNADRRDSA (1220 aa). The 147-residue stretch at 31 to 177 folds into the F5/8 type C domain; it reads CDSPLASALP…IGMRIEVYGC (147 aa). Disulfide bonds link cysteine 31–cysteine 177, cysteine 332–cysteine 364, cysteine 513–cysteine 545, cysteine 551–cysteine 562, cysteine 556–cysteine 571, and cysteine 573–cysteine 583. Over residues 33–59 the composition is skewed to low complexity; it reads SPLASALPRSSFSSSSELSSSHGPGFS. 2 consecutive Laminin G-like domains span residues 183–364 and 370–545; these read VVYF…SFSC and VPVT…IDSC. Asparagine 359 carries N-linked (GlcNAc...) asparagine glycosylation. The region spanning 547–584 is the EGF-like 1 domain; that stretch reads ITDRCLPSYCEHGGECSQSWDTFSCDCLGTGYTGETCH. The Fibrinogen C-terminal domain maps to 585 to 792; the sequence is SSLYEQSCEA…LLCRGDKSFW (208 aa). N-linked (GlcNAc...) asparagine glycosylation is present at asparagine 706. A Laminin G-like 3 domain is found at 793–958; that stretch reads NSASFNTETS…TVTPGVEPGC (166 aa). 5 cysteine pairs are disulfide-bonded: cysteine 931–cysteine 958, cysteine 962–cysteine 975, cysteine 969–cysteine 984, cysteine 986–cysteine 996, and cysteine 1167–cysteine 1203. The region spanning 959-997 is the EGF-like 2 domain; sequence AGHCSTYGHLCRNGGRCREKRRGVTCDCAFSAYDGPFCS. One can recognise a Laminin G-like 4 domain in the interval 1016–1203; it reads EHYTLSENSS…RGHVAPMARC (188 aa). A disordered region spans residues 1215–1236; it reads ELAPRLAGGAGRSGPVDEGEPL. The chain crosses the membrane as a helical span at residues 1246–1266; it reads VIGGVIAVEIFILLCITAIAI. Over 1267–1288 the chain is Cytoplasmic; sequence RIYQQRKLRKENESKVSKKEEC.

Belongs to the neurexin family.

Its subcellular location is the membrane. This is Contactin-associated protein-like 3B (CNTNAP3B) from Homo sapiens (Human).